A 592-amino-acid polypeptide reads, in one-letter code: Aspartate--tRNA(Asp/Asn) ligase (592 aa).

Residue Glu-172 coordinates L-aspartate. Positions 196 to 199 (QLFK) are aspartate. Arg-218 provides a ligand contact to L-aspartate. ATP contacts are provided by residues 218 to 220 (RDE) and Gln-227. Residue His-442 participates in L-aspartate binding. Glu-476 provides a ligand contact to ATP. Arg-483 is an L-aspartate binding site. Residue 528–531 (GWDR) coordinates ATP. The tract at residues 553–592 (SGTDPLTGAPTPITPEQRKEAGIDADPYAAAGRPPGRQSA) is disordered.

It belongs to the class-II aminoacyl-tRNA synthetase family. Type 1 subfamily. As to quaternary structure, homodimer.

Its subcellular location is the cytoplasm. It carries out the reaction tRNA(Asx) + L-aspartate + ATP = L-aspartyl-tRNA(Asx) + AMP + diphosphate. Functionally, aspartyl-tRNA synthetase with relaxed tRNA specificity since it is able to aspartylate not only its cognate tRNA(Asp) but also tRNA(Asn). Reaction proceeds in two steps: L-aspartate is first activated by ATP to form Asp-AMP and then transferred to the acceptor end of tRNA(Asp/Asn). This is Aspartate--tRNA(Asp/Asn) ligase from Acidothermus cellulolyticus (strain ATCC 43068 / DSM 8971 / 11B).